The sequence spans 333 residues: 4-hydroxyproline epimerase (333 aa).

The active-site Proton acceptor is Cys90. Residues 91–92 and Asp249 each bind substrate; that span reads GH. Catalysis depends on Cys253, which acts as the Proton donor. A substrate-binding site is contributed by 254–255; sequence GT.

Belongs to the proline racemase family. As to quaternary structure, homodimer.

It catalyses the reaction trans-4-hydroxy-L-proline = cis-4-hydroxy-D-proline. Allows intracellular utilization of 4-hydroxyproline, one of the major constituents of host collagen, by converting 4-hydroxy-L-proline to 4-hydroxy-D-proline, which can be further metabolized by intracellular 4-hydroxy-D-proline oxidases. Strong B-cell mitogen. Plays an important role in the regulation of intra- and extracellular amino acid pools, allowing the bacterium to profit from host precursors and enzymatic pathways. This chain is 4-hydroxyproline epimerase, found in Brucella canis (strain ATCC 23365 / NCTC 10854 / RM-666).